A 262-amino-acid polypeptide reads, in one-letter code: Oxidoreductase AgnL4 (262 aa).

It belongs to the avfA family.

Its pathway is secondary metabolite biosynthesis. In terms of biological role, oxidoreductase; part of the gene cluster that mediates the biosynthesis of agnestins, dihydroxy-xanthone metabolites. The pathway begins with the assembly and cyclization of atrochrysone thioester by the non-reducing polyketide synthase Agnpks1. The atrochrysone carboxyl ACP thioesterase AgnL7 then breaks the thioester bond and releases the atrochrysone carboxylic acid as the first enzyme-free intermediate. The decarboxylase AgnL1 then catalyzes the concerted decarboxylation-elimination required to convert atochrysone carboxylic acid into emodin anthrone, which is further oxidized to emodin by the anthrone oxygenase AgnL2. Emodin then undergoes reduction catalyzed by the oxidoreductase AgnL4 to yield the dihydroquinone tautomer which is the substrate for reduction by the short chain dehydrogenase AgnL6 reduction to produce hydroxyketone, followed by AgnL8 dehydration and likely spontaneous autoxidation to chrysophanol. Baeyer-Villiger oxidation by the oxidase AgnL3 leads to monodictyphenone via cleavage of the C-10/C-10a bond of chrysophanol. Alternative cleavage at the C-4a/C-10 bond of chrysophanol also leads to the formation some cephalone F. Further conversion to agnestins A and B, requires reduction to dihydro-monodictyphenone, oxidation to agnestin C probably via an epoxide, and rearrangement to either agnestin A or agnestin B directly, although agnestin A or agnestin B can also interconvert. Within the cluster, AgnR1 is the only unassigned oxidoreductase present which could be involved in this conversion. However, AgnR1 seems not to be involved in this step, and thus genes involved in the proposed oxidation/reduction may be located elsewhere on the genome. Further agnestin A derivatives are probably formed by spontaneous decarboxylations, dehydrations and methanolysis reactions. The chain is Oxidoreductase AgnL4 from Paecilomyces divaricatus (Penicillium divaricatum).